Consider the following 697-residue polypeptide: MNKRGLYSKLGISVVGISLLMGVPTLIHANELNYGQLSISPIFQGGSYQLNNKSIDISSLLLDKLSGESQTVVMKFKADKPNSLQALFGLSNSKAGFKNNYFSIFMRDSGEIGVEIRDAQKGINYLFSRPASLWGKHKGQAVENTLVFVSDSKDKTYTMYVNGIEVFSETVDTFLPISNINGIDKATLGAVNREGKEHYLAKGSIDEISLFNKAISDQEVSTIPLSNPFQLIFQSGDSTQANYFRIPTLYTLSSGRVLSSIDARYGGTHDSKSKINIATSYSDDNGKTWSEPIFAMKFNDYEEQLVYWPRDNKLKNSQISGSASFIDSSIVEDKKSGKTILLADVMPAGIGNNNANKADSGFKEINGHYYLKLKKNGDNDFRYTVRENGVVYNETTNKPTNYTINDKYEVLEGGKSLTVEQYSVDFDSGSLRERHNGKQVPMNVFYKDSLFKVTPTNYIAMTTSQNRGESWEQFKLLPPFLGEKHNGTYLCPGQGLALKSSNRLIFATYTSGELTYLISDDSGQTWKKSSASIPFKNATAEAQMVELRDGVIRTFFRTTTGKIAYMTSRDSGETWSKVSYIDGIQQTSYGTQVSAIKYSQLIDGKEAVILSTPNSRSGRKGGQLVVGLVNKEDDSIDWKYHYDIDLPSYGYAYSAITELPNHHIGVLFEKYDSWSRNELHLSNVVQYIDLEINDLTK.

Residues 1 to 29 (MNKRGLYSKLGISVVGISLLMGVPTLIHA) form the signal peptide. R245 contacts substrate. D270 serves as the catalytic Proton acceptor. BNR repeat units follow at residues 280–291 (SYSDDNGKTWSE), 462–473 (TTSQNRGESWEQ), and 517–528 (LISDDSGQTWKK). E541 is an active-site residue. R557 serves as a coordination point for substrate. One copy of the BNR 4 repeat lies at 566-577 (MTSRDSGETWSK). R619 is a binding site for substrate. The active-site Nucleophile is the Y653.

The protein belongs to the glycosyl hydrolase 33 family.

The catalysed reaction is Hydrolysis of alpha-(2-&gt;3)-, alpha-(2-&gt;6)-, alpha-(2-&gt;8)- glycosidic linkages of terminal sialic acid residues in oligosaccharides, glycoproteins, glycolipids, colominic acid and synthetic substrates.. This chain is Sialidase B (nanB), found in Streptococcus pneumoniae serotype 4 (strain ATCC BAA-334 / TIGR4).